A 176-amino-acid chain; its full sequence is Shikimate kinase (176 aa).

An ATP-binding site is contributed by 14–19 (GAGKSS). Residue serine 18 participates in Mg(2+) binding. Aspartate 36, arginine 60, and glycine 82 together coordinate substrate. Arginine 120 contacts ATP. Arginine 138 contributes to the substrate binding site.

This sequence belongs to the shikimate kinase family. In terms of assembly, monomer. Mg(2+) is required as a cofactor.

The protein localises to the cytoplasm. The catalysed reaction is shikimate + ATP = 3-phosphoshikimate + ADP + H(+). It functions in the pathway metabolic intermediate biosynthesis; chorismate biosynthesis; chorismate from D-erythrose 4-phosphate and phosphoenolpyruvate: step 5/7. Functionally, catalyzes the specific phosphorylation of the 3-hydroxyl group of shikimic acid using ATP as a cosubstrate. This chain is Shikimate kinase, found in Dehalococcoides mccartyi (strain ATCC BAA-2266 / KCTC 15142 / 195) (Dehalococcoides ethenogenes (strain 195)).